A 178-amino-acid polypeptide reads, in one-letter code: Protein GrpE (178 aa).

The protein belongs to the GrpE family. As to quaternary structure, homodimer.

The protein resides in the cytoplasm. In terms of biological role, participates actively in the response to hyperosmotic and heat shock by preventing the aggregation of stress-denatured proteins, in association with DnaK and GrpE. It is the nucleotide exchange factor for DnaK and may function as a thermosensor. Unfolded proteins bind initially to DnaJ; upon interaction with the DnaJ-bound protein, DnaK hydrolyzes its bound ATP, resulting in the formation of a stable complex. GrpE releases ADP from DnaK; ATP binding to DnaK triggers the release of the substrate protein, thus completing the reaction cycle. Several rounds of ATP-dependent interactions between DnaJ, DnaK and GrpE are required for fully efficient folding. This Rickettsia akari (strain Hartford) protein is Protein GrpE.